Reading from the N-terminus, the 179-residue chain is Transcription termination/antitermination protein NusG (179 aa).

The 28-residue stretch at 130–157 folds into the KOW domain; sequence EGDVVQIIDGAFMGQEGRVVEIENNKVK.

This sequence belongs to the NusG family.

Functionally, participates in transcription elongation, termination and antitermination. This is Transcription termination/antitermination protein NusG from Streptococcus pyogenes serotype M1.